Consider the following 380-residue polypeptide: Glucose ABC transporter permease protein TsgB13 (380 aa).

10 consecutive transmembrane segments (helical) span residues 20–40, 59–81, 94–114, 115–135, 148–166, 202–222, 255–275, 282–301, 305–325, and 328–348; these read GTPVLTVLAALAVGGVALVAL, QFGLTEVLVRAVPLILAGLAVYL, GQLLLGALAGTWVAVNVSLPA, VALLPLMFLAACVAGAFWAGI, IITSLLLTFVAQELQSYLL, IPLFADVHAGLLVAVAAVVAT, VYLFVFLLGGAFAALGGIAEI, FRAAFAPGYGFTAIPIALLG, AVKVTLAGLFFAVLFVGGSSV, and AFGVPAALVEIIQALVILFLI.

This sequence belongs to the binding-protein-dependent transport system permease family. In terms of assembly, the complex is composed of two ATP-binding proteins (TsgD13), two transmembrane proteins (TsgB13 and TsgC13) and a solute-binding protein (TsgA13).

The protein localises to the cell membrane. In terms of biological role, part of an ABC transporter complex involved in glucose import. Responsible for the translocation of the substrate across the membrane. This is Glucose ABC transporter permease protein TsgB13 (tsgB13) from Haloferax volcanii (strain ATCC 29605 / DSM 3757 / JCM 8879 / NBRC 14742 / NCIMB 2012 / VKM B-1768 / DS2) (Halobacterium volcanii).